Reading from the N-terminus, the 604-residue chain is Ectonucleoside triphosphate diphosphohydrolase 7 (604 aa).

At 1-28 the chain is on the cytoplasmic side; the sequence is MARISFSYLCPASWYFTVPTVSPFLRQR. A helical membrane pass occupies residues 29 to 49; sequence VAFLGLFFISCLLLLMLIIDF. Topologically, residues 50-546 are vesicular; sequence RHWSASLPRD…QAHGSWFRLS (497 aa). Glu217 acts as the Proton acceptor in catalysis. N-linked (GlcNAc...) asparagine glycosylation occurs at Asn330. Cys448 and Cys477 are joined by a disulfide. Residues 547-567 form a helical membrane-spanning segment; that stretch reads FVYNHYLFFACILVVLLAIVL. Residues 568–604 lie on the Cytoplasmic side of the membrane; the sequence is YLLRLRRIHHRQTRASAPLDLLWLEEVVPMMGVQVGP.

Belongs to the GDA1/CD39 NTPase family. Requires Ca(2+) as cofactor. It depends on Mg(2+) as a cofactor.

It is found in the cytoplasmic vesicle membrane. The catalysed reaction is a ribonucleoside 5'-triphosphate + H2O = a ribonucleoside 5'-diphosphate + phosphate + H(+). It catalyses the reaction UTP + H2O = UDP + phosphate + H(+). It carries out the reaction GTP + H2O = GDP + phosphate + H(+). The enzyme catalyses CTP + H2O = CDP + phosphate + H(+). Functionally, catalyzes the hydrolysis of nucleoside triphosphates and diphosphates in a calcium- or magnesium-dependent manner. Preferentially hydrolyzes nucleoside 5'-triphosphates, with substrate preference for UTP &gt; GTP &gt; CTP. Hydrolyzes ATP and nucleoside diphosphates only to a minor extent. In Pongo abelii (Sumatran orangutan), this protein is Ectonucleoside triphosphate diphosphohydrolase 7 (ENTPD7).